The sequence spans 194 residues: Holliday junction branch migration complex subunit RuvA (194 aa).

A domain I region spans residues 1–63 (MFEYLKGTVA…EDELSLYGFM (63 aa)). The tract at residues 64–142 (SIEELDMFQK…KTNVVYDYTL (79 aa)) is domain II. Residues 143 to 151 (FNDDHKDDD) are flexible linker. Positions 151 to 194 (DEAVQALMALGYSKLESEKAVEAVRDMSLGTEDVIKRALKWLMK) are domain III.

This sequence belongs to the RuvA family. As to quaternary structure, homotetramer. Forms an RuvA(8)-RuvB(12)-Holliday junction (HJ) complex. HJ DNA is sandwiched between 2 RuvA tetramers; dsDNA enters through RuvA and exits via RuvB. An RuvB hexamer assembles on each DNA strand where it exits the tetramer. Each RuvB hexamer is contacted by two RuvA subunits (via domain III) on 2 adjacent RuvB subunits; this complex drives branch migration. In the full resolvosome a probable DNA-RuvA(4)-RuvB(12)-RuvC(2) complex forms which resolves the HJ.

It is found in the cytoplasm. In terms of biological role, the RuvA-RuvB-RuvC complex processes Holliday junction (HJ) DNA during genetic recombination and DNA repair, while the RuvA-RuvB complex plays an important role in the rescue of blocked DNA replication forks via replication fork reversal (RFR). RuvA specifically binds to HJ cruciform DNA, conferring on it an open structure. The RuvB hexamer acts as an ATP-dependent pump, pulling dsDNA into and through the RuvAB complex. HJ branch migration allows RuvC to scan DNA until it finds its consensus sequence, where it cleaves and resolves the cruciform DNA. The chain is Holliday junction branch migration complex subunit RuvA from Alkaliphilus oremlandii (strain OhILAs) (Clostridium oremlandii (strain OhILAs)).